The chain runs to 214 residues: Phosphatidylserine decarboxylase proenzyme (214 aa).

Serine 183 functions as the Schiff-base intermediate with substrate; via pyruvic acid in the catalytic mechanism. Serine 183 is subject to Pyruvic acid (Ser); by autocatalysis.

It belongs to the phosphatidylserine decarboxylase family. PSD-A subfamily. Heterodimer of a large membrane-associated beta subunit and a small pyruvoyl-containing alpha subunit. Pyruvate serves as cofactor. In terms of processing, is synthesized initially as an inactive proenzyme. Formation of the active enzyme involves a self-maturation process in which the active site pyruvoyl group is generated from an internal serine residue via an autocatalytic post-translational modification. Two non-identical subunits are generated from the proenzyme in this reaction, and the pyruvate is formed at the N-terminus of the alpha chain, which is derived from the carboxyl end of the proenzyme. The post-translation cleavage follows an unusual pathway, termed non-hydrolytic serinolysis, in which the side chain hydroxyl group of the serine supplies its oxygen atom to form the C-terminus of the beta chain, while the remainder of the serine residue undergoes an oxidative deamination to produce ammonia and the pyruvoyl prosthetic group on the alpha chain.

The protein resides in the cell membrane. It carries out the reaction a 1,2-diacyl-sn-glycero-3-phospho-L-serine + H(+) = a 1,2-diacyl-sn-glycero-3-phosphoethanolamine + CO2. It functions in the pathway phospholipid metabolism; phosphatidylethanolamine biosynthesis; phosphatidylethanolamine from CDP-diacylglycerol: step 2/2. In terms of biological role, catalyzes the formation of phosphatidylethanolamine (PtdEtn) from phosphatidylserine (PtdSer). This Desulfotalea psychrophila (strain LSv54 / DSM 12343) protein is Phosphatidylserine decarboxylase proenzyme.